The chain runs to 211 residues: Thiamine-phosphate synthase (211 aa).

Residues 39–41 (QLR) and Asn71 each bind 4-amino-2-methyl-5-(diphosphooxymethyl)pyrimidine. Mg(2+)-binding residues include Asp72 and Asp91. Ser110 serves as a coordination point for 4-amino-2-methyl-5-(diphosphooxymethyl)pyrimidine. 136 to 138 (TGT) is a 2-[(2R,5Z)-2-carboxy-4-methylthiazol-5(2H)-ylidene]ethyl phosphate binding site. Lys139 contacts 4-amino-2-methyl-5-(diphosphooxymethyl)pyrimidine. Residues Gly167 and 187–188 (VS) each bind 2-[(2R,5Z)-2-carboxy-4-methylthiazol-5(2H)-ylidene]ethyl phosphate.

It belongs to the thiamine-phosphate synthase family. The cofactor is Mg(2+).

It catalyses the reaction 2-[(2R,5Z)-2-carboxy-4-methylthiazol-5(2H)-ylidene]ethyl phosphate + 4-amino-2-methyl-5-(diphosphooxymethyl)pyrimidine + 2 H(+) = thiamine phosphate + CO2 + diphosphate. It carries out the reaction 2-(2-carboxy-4-methylthiazol-5-yl)ethyl phosphate + 4-amino-2-methyl-5-(diphosphooxymethyl)pyrimidine + 2 H(+) = thiamine phosphate + CO2 + diphosphate. The enzyme catalyses 4-methyl-5-(2-phosphooxyethyl)-thiazole + 4-amino-2-methyl-5-(diphosphooxymethyl)pyrimidine + H(+) = thiamine phosphate + diphosphate. Its pathway is cofactor biosynthesis; thiamine diphosphate biosynthesis; thiamine phosphate from 4-amino-2-methyl-5-diphosphomethylpyrimidine and 4-methyl-5-(2-phosphoethyl)-thiazole: step 1/1. In terms of biological role, condenses 4-methyl-5-(beta-hydroxyethyl)thiazole monophosphate (THZ-P) and 2-methyl-4-amino-5-hydroxymethyl pyrimidine pyrophosphate (HMP-PP) to form thiamine monophosphate (TMP). This is Thiamine-phosphate synthase from Xanthobacter autotrophicus (strain ATCC BAA-1158 / Py2).